The sequence spans 276 residues: Putative oxidoreductase SadH (276 aa).

Serine 142 is a binding site for substrate. Tyrosine 155 functions as the Proton acceptor in the catalytic mechanism.

The protein belongs to the short-chain dehydrogenases/reductases (SDR) family.

Its function is as follows. Required for maintaining the appropriate mycolic acid composition and permeability of the envelope on its exposure to acidic pH. This chain is Putative oxidoreductase SadH (sadH), found in Mycobacterium tuberculosis (strain CDC 1551 / Oshkosh).